Here is a 337-residue protein sequence, read N- to C-terminus: MLQLILHHPYASLAAGILLYFFCLATYRLYLSPVAGFPGPRLAALTRFYEYYYDGVKGGQFVWKVKDLHQKYGRLSCSTVVGQELKLEQGPIVRIGPCELHVNDPTFVSTLYPATGQRRNKDPFWTDQFGPKTAFGTVDHDHHRLRRGPFNRFFSKANVTRLEPMLRQQANKLCEKLEKYAGTGRVIDLSDPFGCMATDIISTYALGYSFNFLDAEDFQPNLLQGLNGFTPLAPTVKQFPWLLKLLRALPDSWALKINPKIAPFLDFQRTMKKVITDVEAEVQSEAGRPKADQATTIFHEVLRGDIPPEEKETARLWQEGEAIIGAGTFLQTPQEAV.

A helical transmembrane segment spans residues 4-24 (LILHHPYASLAAGILLYFFCL). Asparagine 158 carries N-linked (GlcNAc...) asparagine glycosylation.

This sequence belongs to the cytochrome P450 family. The cofactor is heme.

The protein resides in the membrane. The protein operates within secondary metabolite biosynthesis; terpenoid biosynthesis. Functionally, cytochrome P450 monooxygenase; part of the gene cluster that mediates the biosynthesis of diterpenoid pyrones. The first step of the pathway is the synthesis of the alpha-pyrone moiety by the polyketide synthase dpmpA via condensation of one acetyl-CoA starter unit with 3 malonyl-CoA units and 2 methylations. The alpha-pyrone is then combined with geranylgeranyl pyrophosphate (GGPP) formed by the GGPP synthase dpmpD through the action of the prenyltransferase dpmpC to yield a linear alpha-pyrone diterpenoid. Subsequent steps in the diterpenoid pyrone biosynthetic pathway involve the decalin core formation, which is initiated by the epoxidation of the C10-C11 olefin by the FAD-dependent oxidoreductase dpmpE, and is followed by a cyclization cascade catalyzed by the terpene cyclase dpmpB. The short chain dehydrogenase/reductase dpmpG then oxidizes the 8S hydroxy group to a ketone and the short chain dehydrogenase/reductase dpmpH reduces the ketone to the 8R hydroxy group to yield higginsianin B. Higginsianin B is further methylated by the methyltransferase dpmpI to produce the intermediate named FDDP B. The cytochrome P450 monooxygenase dpmpJ then oxidizes the C-26 methyl to primary alcohol, producing the final diterpenoid pyrone with a C-26 primary alcohol on the gamma-pyrone moiety named FDDP C. The chain is Cytochrome P450 monooxygenase dpmpJ from Macrophomina phaseolina (strain MS6) (Charcoal rot fungus).